Reading from the N-terminus, the 168-residue chain is Mediator of RNA polymerase II transcription subunit 7b (168 aa).

Pro residues predominate over residues 1 to 12 (MATATYPPPPPY). Residues 1–33 (MATATYPPPPPYYRLYKDFSENTDSAPEPPPPI) form a disordered region. 2 coiled-coil regions span residues 64–92 (KDSN…ADVL) and 132–162 (IMEL…KDAF).

Belongs to the Mediator complex subunit 7 family. In terms of assembly, component of the Mediator complex. Interacts with MEE14/CBP1.

It localises to the nucleus. Component of the Mediator complex, a coactivator involved in the regulated transcription of nearly all RNA polymerase II-dependent genes. Mediator functions as a bridge to convey information from gene-specific regulatory proteins to the basal RNA polymerase II transcription machinery. The Mediator complex, having a compact conformation in its free form, is recruited to promoters by direct interactions with regulatory proteins and serves for the assembly of a functional pre-initiation complex with RNA polymerase II and the general transcription factors. In Arabidopsis thaliana (Mouse-ear cress), this protein is Mediator of RNA polymerase II transcription subunit 7b (MED7B).